The sequence spans 406 residues: Outer membrane protein assembly factor BamB (406 aa).

Residues 1-23 (MMKQVDMYKRVALIALMGMSLAG) form the signal peptide. C24 is lipidated: N-palmitoyl cysteine. Residue C24 is the site of S-diacylglycerol cysteine attachment.

This sequence belongs to the BamB family. Part of the Bam complex.

Its subcellular location is the cell outer membrane. Its function is as follows. Part of the outer membrane protein assembly complex, which is involved in assembly and insertion of beta-barrel proteins into the outer membrane. This Xanthomonas campestris pv. campestris (strain ATCC 33913 / DSM 3586 / NCPPB 528 / LMG 568 / P 25) protein is Outer membrane protein assembly factor BamB.